The primary structure comprises 282 residues: Pantothenate synthetase (282 aa).

Residue 30-37 (MGYLHEGH) participates in ATP binding. The active-site Proton donor is His37. Gln61 serves as a coordination point for (R)-pantoate. Gln61 is a beta-alanine binding site. 147–150 (GMKD) serves as a coordination point for ATP. Residue Gln153 participates in (R)-pantoate binding. Residues Val176 and 184–187 (KSSR) contribute to the ATP site.

This sequence belongs to the pantothenate synthetase family. In terms of assembly, homodimer.

The protein localises to the cytoplasm. It carries out the reaction (R)-pantoate + beta-alanine + ATP = (R)-pantothenate + AMP + diphosphate + H(+). Its pathway is cofactor biosynthesis; (R)-pantothenate biosynthesis; (R)-pantothenate from (R)-pantoate and beta-alanine: step 1/1. Catalyzes the condensation of pantoate with beta-alanine in an ATP-dependent reaction via a pantoyl-adenylate intermediate. This Bacillus anthracis (strain A0248) protein is Pantothenate synthetase.